We begin with the raw amino-acid sequence, 287 residues long: MLKKVLNGTRIAKKLEFKILKQVNYKLSLGQRPPGLAVILIGSNSASTIYVKKKRFMCEQVGFISKFWKFSKNIQESKILNLIYKLNYDTTIDGILVQLPIPPNINNQKLFSSIIPTKDVDGFHPYNIGSLCQKSPYLRPCTPFGIITMLKHYKIKIRGLHAVVIGASNIVGRPMSMELLLAGCTTTITHRFTKNLKHYVKQADLIVIAIGHAHFLKGTWIKKGAIVIDVGINRLKNGEIVGDVDFKTAYKKSSYITPVPGGVGPMTVITLLNNTLKAYEQISKDCK.

Residues 166–168 (GAS) and I232 each bind NADP(+).

It belongs to the tetrahydrofolate dehydrogenase/cyclohydrolase family. Homodimer.

The catalysed reaction is (6R)-5,10-methylene-5,6,7,8-tetrahydrofolate + NADP(+) = (6R)-5,10-methenyltetrahydrofolate + NADPH. The enzyme catalyses (6R)-5,10-methenyltetrahydrofolate + H2O = (6R)-10-formyltetrahydrofolate + H(+). It participates in one-carbon metabolism; tetrahydrofolate interconversion. Functionally, catalyzes the oxidation of 5,10-methylenetetrahydrofolate to 5,10-methenyltetrahydrofolate and then the hydrolysis of 5,10-methenyltetrahydrofolate to 10-formyltetrahydrofolate. In Buchnera aphidicola subsp. Baizongia pistaciae (strain Bp), this protein is Bifunctional protein FolD.